A 127-amino-acid polypeptide reads, in one-letter code: Aspartate 1-decarboxylase (127 aa).

The active-site Schiff-base intermediate with substrate; via pyruvic acid is the S25. S25 is modified (pyruvic acid (Ser)). Substrate is bound at residue T57. The Proton donor role is filled by Y58. 73–75 (GAA) is a substrate binding site.

The protein belongs to the PanD family. In terms of assembly, heterooctamer of four alpha and four beta subunits. Requires pyruvate as cofactor. In terms of processing, is synthesized initially as an inactive proenzyme, which is activated by self-cleavage at a specific serine bond to produce a beta-subunit with a hydroxyl group at its C-terminus and an alpha-subunit with a pyruvoyl group at its N-terminus.

The protein localises to the cytoplasm. It carries out the reaction L-aspartate + H(+) = beta-alanine + CO2. It functions in the pathway cofactor biosynthesis; (R)-pantothenate biosynthesis; beta-alanine from L-aspartate: step 1/1. Catalyzes the pyruvoyl-dependent decarboxylation of aspartate to produce beta-alanine. This chain is Aspartate 1-decarboxylase, found in Staphylococcus aureus (strain MSSA476).